The chain runs to 918 residues: Signal transduction histidine-protein kinase BarA (918 aa).

Over 1–9 (MTNYSLRAR) the chain is Cytoplasmic. Residues 10–31 (MMILILAPTVLIGLLLSIFFVV) traverse the membrane as a helical segment. Residues 32–176 (HRYNDLQRQL…KSVRLQQYKE (145 aa)) lie on the Periplasmic side of the membrane. Residues 177–196 (IFISSVMMLFCIGIALIFGW) traverse the membrane as a helical segment. The Cytoplasmic segment spans residues 197–918 (RLMRDVTGPI…VAREASKILG (722 aa)). Residues 200–252 (RDVTGPIRNMVNTVDRIRRGQLDSRVEGFMLGELDMLKNGINSMAMSLAAYHE) form the HAMP domain. A Histidine kinase domain is found at 299 to 520 (NMSHELRTPL…TFWFHINLDL (222 aa)). Residue His-302 is modified to Phosphohistidine; by autocatalysis. The Response regulatory domain occupies 669 to 785 (TVMAVDDNPA…RLHNLLLRYK (117 aa)). The residue at position 718 (Asp-718) is a 4-aspartylphosphate. An HPt domain is found at 822–918 (KTDLARDMLQ…VAREASKILG (97 aa)). His-861 carries the phosphohistidine modification.

In terms of processing, activation requires a sequential transfer of a phosphate group from a His in the primary transmitter domain, to an Asp in the receiver domain and to a His in the secondary transmitter domain.

It is found in the cell inner membrane. It carries out the reaction ATP + protein L-histidine = ADP + protein N-phospho-L-histidine.. In terms of biological role, member of the two-component regulatory system UvrY/BarA involved in the regulation of carbon metabolism via the CsrA/CsrB regulatory system. Phosphorylates UvrY, probably via a four-step phosphorelay. In Escherichia coli O157:H7, this protein is Signal transduction histidine-protein kinase BarA (barA).